The following is a 283-amino-acid chain: ATP synthase gamma chain (283 aa).

It belongs to the ATPase gamma chain family. In terms of assembly, F-type ATPases have 2 components, CF(1) - the catalytic core - and CF(0) - the membrane proton channel. CF(1) has five subunits: alpha(3), beta(3), gamma(1), delta(1), epsilon(1). CF(0) has three main subunits: a, b and c.

It localises to the cell membrane. In terms of biological role, produces ATP from ADP in the presence of a proton gradient across the membrane. The gamma chain is believed to be important in regulating ATPase activity and the flow of protons through the CF(0) complex. In Clostridium kluyveri (strain NBRC 12016), this protein is ATP synthase gamma chain.